A 317-amino-acid chain; its full sequence is GTPase Era (317 aa).

Residues 23-190 (RSGFVALIGP…MDYLVETLPE (168 aa)) form the Era-type G domain. The G1 stretch occupies residues 31-38 (GPTNAGKS). Position 31 to 38 (31 to 38 (GPTNAGKS)) interacts with GTP. Residues 57-61 (QTTRA) are G2. The G3 stretch occupies residues 78-81 (DTPG). GTP contacts are provided by residues 78-82 (DTPGI) and 140-143 (NKID). The G4 stretch occupies residues 140 to 143 (NKID). A G5 region spans residues 169–171 (ISA). Residues 221–298 (LHQELPYASH…HLFLFVKVRE (78 aa)) enclose the KH type-2 domain.

The protein belongs to the TRAFAC class TrmE-Era-EngA-EngB-Septin-like GTPase superfamily. Era GTPase family. In terms of assembly, monomer.

The protein localises to the cytoplasm. The protein resides in the cell inner membrane. In terms of biological role, an essential GTPase that binds both GDP and GTP, with rapid nucleotide exchange. Plays a role in 16S rRNA processing and 30S ribosomal subunit biogenesis and possibly also in cell cycle regulation and energy metabolism. This chain is GTPase Era, found in Agrobacterium fabrum (strain C58 / ATCC 33970) (Agrobacterium tumefaciens (strain C58)).